We begin with the raw amino-acid sequence, 1790 residues long: Cytokinesis protein sepA (1790 aa).

Disordered stretches follow at residues 1–275 (MPTS…YLTR) and 328–350 (GEQK…GILE). Over residues 24-35 (ERPVEDRWDAHG) the composition is skewed to basic and acidic residues. Composition is skewed to low complexity over residues 39-62 (SLAP…SIQS) and 187-203 (SHHS…SRMS). A compositionally biased stretch (polar residues) spans 205 to 236 (DQASIHSSLSSNTRGSSYISTDGSSRTTLPSH). Residues 274-702 (TRPRDDRVVD…YVAMDRRLPD (429 aa)) form the GBD/FH3 domain. Residues 328–341 (GEQKRKQKARETHG) show a composition bias toward basic and acidic residues. The stretch at 724–811 (AEARRAYDES…QRNELETREL (88 aa)) forms a coiled coil. The FH1 domain maps to 955–1136 (DPEQATGLLG…NYLASQGAPS (182 aa)). Residues 975–986 (ADDAKDEGKPTE) show a composition bias toward basic and acidic residues. 3 disordered regions span residues 975-1119 (ADDA…PPGT), 1465-1484 (NLSD…ITQR), and 1596-1790 (RAAA…PSTS). 2 stretches are compositionally biased toward pro residues: residues 1015–1026 (APPPPPPPPPAH) and 1033–1118 (APPP…PPPG). The FH2 domain maps to 1141-1564 (VMSSIRPKKK…TEASLARKRI (424 aa)). Positions 1435–1566 (LQKLNVDQLR…ASLARKRINV (132 aa)) form a coiled coil. The region spanning 1581–1613 (SPATSGAMDSLLEKLRAAAPQAKDQRDRRRRAR) is the DAD domain. Residues 1608 to 1620 (RRRRARLKERHQV) show a composition bias toward basic residues. The segment covering 1644-1661 (SGATDTNATDSSLLSPTI) has biased composition (polar residues). The span at 1694–1710 (PDPERTRRRRESAEEER) shows a compositional bias: basic and acidic residues. Positions 1720-1746 (GATSGSKDSNDTTPLSPVTEPTSTQGE) are enriched in polar residues.

This sequence belongs to the formin homology family. BNI1 subfamily.

In terms of biological role, involved in cytokinesis. Overexpression results in growth inhibition. The protein is Cytokinesis protein sepA (sepA) of Emericella nidulans (strain FGSC A4 / ATCC 38163 / CBS 112.46 / NRRL 194 / M139) (Aspergillus nidulans).